Consider the following 88-residue polypeptide: Putative membrane protein insertion efficiency factor (88 aa).

It belongs to the UPF0161 family.

It is found in the cell membrane. Its function is as follows. Could be involved in insertion of integral membrane proteins into the membrane. The protein is Putative membrane protein insertion efficiency factor of Exiguobacterium sibiricum (strain DSM 17290 / CCUG 55495 / CIP 109462 / JCM 13490 / 255-15).